The sequence spans 257 residues: Phycoerythrobilin:ferredoxin oxidoreductase (257 aa).

Belongs to the HY2 family.

The catalysed reaction is (3Z)-phycoerythrobilin + oxidized 2[4Fe-4S]-[ferredoxin] = 15,16-dihydrobiliverdin + reduced 2[4Fe-4S]-[ferredoxin] + 2 H(+). In terms of biological role, catalyzes the two-electron reduction of the C2 and C3(1) diene system of 15,16-dihydrobiliverdin. This Synechococcus sp. (strain CC9311) protein is Phycoerythrobilin:ferredoxin oxidoreductase.